The chain runs to 185 residues: Translation initiation factor IF-3 (185 aa).

It belongs to the IF-3 family. In terms of assembly, monomer.

It is found in the cytoplasm. Its function is as follows. IF-3 binds to the 30S ribosomal subunit and shifts the equilibrium between 70S ribosomes and their 50S and 30S subunits in favor of the free subunits, thus enhancing the availability of 30S subunits on which protein synthesis initiation begins. This Streptococcus pneumoniae serotype 19F (strain G54) protein is Translation initiation factor IF-3.